We begin with the raw amino-acid sequence, 292 residues long: Tissue factor (292 aa).

A signal peptide spans 1-35 (MATPNGPRVPCPQAAVARALLFGLVLIQGAGVAGT). At 36–248 (TDVVVAYNIT…TSHEKVLSTE (213 aa)) the chain is on the extracellular side. A glycan (N-linked (GlcNAc...) asparagine) is linked at asparagine 43. Residues 46–48 (WKS) carry the WKS motif motif. Cysteine 81 and cysteine 89 are disulfide-bonded. 2 N-linked (GlcNAc...) asparagine glycosylation sites follow: asparagine 153 and asparagine 181. Cysteine 215 and cysteine 238 form a disulfide bridge. A helical transmembrane segment spans residues 249-271 (LFFIIGTVMLVIIIFIVVLSVSL). Topologically, residues 272-292 (HKCRKVRAERSGKENTPLNAA) are cytoplasmic. The S-palmitoyl cysteine moiety is linked to residue cysteine 274.

Belongs to the tissue factor family. As to quaternary structure, interacts with HSPE; the interaction, inhibited by heparin, promotes the generation of activated factor X and activates coagulation in the presence of activated factor VII.

Its subcellular location is the membrane. Initiates blood coagulation by forming a complex with circulating factor VII or VIIa. The [TF:VIIa] complex activates factors IX or X by specific limited proteolysis. TF plays a role in normal hemostasis by initiating the cell-surface assembly and propagation of the coagulation protease cascade. This chain is Tissue factor (F3), found in Bos taurus (Bovine).